Here is a 1391-residue protein sequence, read N- to C-terminus: DNA-directed RNA polymerase subunit beta (1391 aa).

This sequence belongs to the RNA polymerase beta chain family. As to quaternary structure, the RNAP catalytic core consists of 2 alpha, 1 beta, 1 beta' and 1 omega subunit. When a sigma factor is associated with the core the holoenzyme is formed, which can initiate transcription.

The enzyme catalyses RNA(n) + a ribonucleoside 5'-triphosphate = RNA(n+1) + diphosphate. DNA-dependent RNA polymerase catalyzes the transcription of DNA into RNA using the four ribonucleoside triphosphates as substrates. The chain is DNA-directed RNA polymerase subunit beta from Paramagnetospirillum magneticum (strain ATCC 700264 / AMB-1) (Magnetospirillum magneticum).